A 430-amino-acid chain; its full sequence is NAD(P)(+) glycohydrolase toxin Tse6 (430 aa).

The next 3 membrane-spanning stretches (helical) occupy residues 17–37 (FGVA…AAVV), 46–66 (LAAV…FQIV), and 193–213 (LLLA…IGGL).

As to quaternary structure, interacts with Tsi6, VgrG1a, EagT6 and EF-Tu.

Its subcellular location is the membrane. It catalyses the reaction NAD(+) + H2O = ADP-D-ribose + nicotinamide + H(+). In terms of biological role, type VI secretion exported toxin that acts as a glycohydrolase on bacterial target cells and degrades the essential dinucleotides NAD(+) and NADP(+), thereby inducing bacteriostasis. The activity resides in the C-terminal region that is initially neutralized by the cognate immunity protein Tsi6. The sequence is that of NAD(P)(+) glycohydrolase toxin Tse6 from Pseudomonas aeruginosa (strain ATCC 15692 / DSM 22644 / CIP 104116 / JCM 14847 / LMG 12228 / 1C / PRS 101 / PAO1).